Here is an 826-residue protein sequence, read N- to C-terminus: Protein lozenge (826 aa).

3 disordered regions span residues 1–45 (MHLH…ASQT), 87–171 (PVSV…WSSS), and 214–263 (ASVG…NNNN). Residues 12–24 (PPSPSPNPTPTPS) show a composition bias toward pro residues. Over residues 106–141 (SHHHHHLHHHYSPYHHAHPYHPPHPHAPHHHHHHHP) the composition is skewed to basic residues. The span at 142-153 (PYPYPPAGPHPP) shows a compositional bias: pro residues. The span at 156–171 (VTSSSTSPTGNGWSSS) shows a compositional bias: polar residues. Positions 275–403 (LVQKRQQEHP…TVDGPREPRS (129 aa)) constitute a Runt domain. The segment covering 774–798 (QQQQQQQQQQQQVHHPQQQQVESAG) has biased composition (low complexity). The tract at residues 774-826 (QQQQQQQQQQQQVHHPQQQQVESAGEVGGSGAGGVESAREEDVGDLSQVWRPY) is disordered.

As to expression, expressed in the pupal eye during programmed cell death.

The protein resides in the nucleus. Involved in prepatterning photoreceptor precursors in the developing eye; in the larval eye disk it defines a subset of cells as an equipotential group that is competent to respond to the sevenless developmental signal and another subset that confer proper photoreceptor identity by positively regulating the homeo box gene Bar. Involved in the aop/pnt dynamic in a Ras-dependent manner to regulate pros expression. Promotes apoptosis in the pupal eye by directly activating aos and klu. Also modulates hid- and rpr-mediated cell death. Regulates amos function in olfactory sensilla development. The polypeptide is Protein lozenge (lz) (Drosophila melanogaster (Fruit fly)).